We begin with the raw amino-acid sequence, 421 residues long: Tubulin gamma-3 chain (421 aa).

94-100 (AGGTGSG) contributes to the GTP binding site.

Belongs to the tubulin family.

The protein resides in the cytoplasm. The protein localises to the cytoskeleton. Its subcellular location is the microtubule organizing center. Its function is as follows. Tubulin is the major constituent of microtubules. The gamma chain is found at microtubule organizing centers (MTOC) such as the spindle poles, suggesting that it is involved in the minus-end nucleation of microtubule assembly. This is Tubulin gamma-3 chain (TUBG3) from Zea mays (Maize).